Consider the following 570-residue polypeptide: Sulfite reductase [NADPH] hemoprotein beta-component (570 aa).

The [4Fe-4S] cluster site is built by Cys-434, Cys-440, Cys-479, and Cys-483. Position 483 (Cys-483) interacts with siroheme.

Belongs to the nitrite and sulfite reductase 4Fe-4S domain family. Alpha(8)-beta(8). The alpha component is a flavoprotein, the beta component is a hemoprotein. The cofactor is siroheme. [4Fe-4S] cluster serves as cofactor.

It carries out the reaction hydrogen sulfide + 3 NADP(+) + 3 H2O = sulfite + 3 NADPH + 4 H(+). It functions in the pathway sulfur metabolism; hydrogen sulfide biosynthesis; hydrogen sulfide from sulfite (NADPH route): step 1/1. Functionally, component of the sulfite reductase complex that catalyzes the 6-electron reduction of sulfite to sulfide. This is one of several activities required for the biosynthesis of L-cysteine from sulfate. This Salmonella paratyphi B (strain ATCC BAA-1250 / SPB7) protein is Sulfite reductase [NADPH] hemoprotein beta-component.